The chain runs to 184 residues: MTDTAPKAPVVDIPAITALVEPEVKALGLELVRIAMFGGKSDPTLQIMAERPDTRQIGLTECEALSRRLSEIFDEQDPIEDAYRLEVSSPGIDRPLTRRKDYQDWKGFSARIRLSAPLDGRKQFDGEIIGIDDADNVILDCPKVGQKILPFSAIERSKLLLTDALIAATQPLDSEGADQIVREG.

The protein belongs to the RimP family.

It is found in the cytoplasm. Functionally, required for maturation of 30S ribosomal subunits. In Zymomonas mobilis subsp. mobilis (strain ATCC 31821 / ZM4 / CP4), this protein is Ribosome maturation factor RimP.